The following is a 230-amino-acid chain: 7-cyano-7-deazaguanine synthase (230 aa).

Residue 8 to 18 participates in ATP binding; it reads LSGGMDSAVVT. 4 residues coordinate Zn(2+): cysteine 186, cysteine 196, cysteine 199, and cysteine 202.

It belongs to the QueC family. Zn(2+) is required as a cofactor.

It carries out the reaction 7-carboxy-7-deazaguanine + NH4(+) + ATP = 7-cyano-7-deazaguanine + ADP + phosphate + H2O + H(+). Its pathway is purine metabolism; 7-cyano-7-deazaguanine biosynthesis. Functionally, catalyzes the ATP-dependent conversion of 7-carboxy-7-deazaguanine (CDG) to 7-cyano-7-deazaguanine (preQ(0)). The chain is 7-cyano-7-deazaguanine synthase from Xylella fastidiosa (strain M23).